The primary structure comprises 319 residues: Ribonucleoside-diphosphate reductase 2 subunit beta (319 aa).

Fe cation is bound by residues Asp67, Glu98, and His101. The active site involves Tyr105. Glu158, Glu192, and His195 together coordinate Fe cation.

Belongs to the ribonucleoside diphosphate reductase small chain family. In terms of assembly, tetramer of two alpha and two beta subunits. It depends on Fe cation as a cofactor.

The enzyme catalyses a 2'-deoxyribonucleoside 5'-diphosphate + [thioredoxin]-disulfide + H2O = a ribonucleoside 5'-diphosphate + [thioredoxin]-dithiol. Its function is as follows. Provides the precursors necessary for DNA synthesis. Catalyzes the biosynthesis of deoxyribonucleotides from the corresponding ribonucleotides. R2F contains the tyrosyl radical required for catalysis. The protein is Ribonucleoside-diphosphate reductase 2 subunit beta (nrdF) of Salmonella typhimurium (strain LT2 / SGSC1412 / ATCC 700720).